Reading from the N-terminus, the 297-residue chain is MFEVEYLIKDCDDVNKNTLEQEFQDLNIEDWKWDAATGQLIVKGSVSPSKVLRRLENATSKPILIRGASNKESGVSILYEANEDITQIPKVYGLCRFIPTEEKIFLDLIATQLLPNREYTGLVTISGDISRGLKSAGDSLVTLFNANSNEQGKIVLDKEVSGSLPNWIGHCFVLKCVDDSDSATMGIISRSAGLGQNTKQICACTGKSLWTEHAELKSVNEGSSCCSKKDSSPSEKPSCCSQEKKSCCSSKKPSCCSQEKKGCCSTEKTSCCSQEKKSCCTSEKPSCCSNGKSTVCA.

Position 11 (Cys-11) interacts with Cu cation. The segment at 222-263 is disordered; it reads GSSCCSKKDSSPSEKPSCCSQEKKSCCSSKKPSCCSQEKKGC. The segment covering 234-257 has biased composition (low complexity); the sequence is SEKPSCCSQEKKSCCSSKKPSCCS.

Belongs to the CCS1 family.

The protein resides in the cytoplasm. Functionally, copper chaperone for superoxide dismutase 1 (sod1). Binds copper ions and delivers them specifically to sod1. Also has a role in cell protection against copper ion toxicity during conditions of copper excess. The C-terminal region is thought to act specifically in this sequestration role. The polypeptide is Superoxide dismutase 1 copper chaperone (ccs1) (Schizosaccharomyces pombe (strain 972 / ATCC 24843) (Fission yeast)).